The chain runs to 274 residues: Carboxy-S-adenosyl-L-methionine synthase (274 aa).

S-adenosyl-L-methionine is bound by residues tyrosine 59, 93 to 95, 149 to 150, asparagine 164, and arginine 231; these read GCS and DI.

It belongs to the class I-like SAM-binding methyltransferase superfamily. Cx-SAM synthase family. In terms of assembly, homodimer.

It carries out the reaction prephenate + S-adenosyl-L-methionine = carboxy-S-adenosyl-L-methionine + 3-phenylpyruvate + H2O. Catalyzes the conversion of S-adenosyl-L-methionine (SAM) to carboxy-S-adenosyl-L-methionine (Cx-SAM). The sequence is that of Carboxy-S-adenosyl-L-methionine synthase from Psychrobacter sp. (strain PRwf-1).